Consider the following 487-residue polypeptide: UDP-N-acetylmuramate--L-alanine ligase (487 aa).

ATP is bound at residue 129–135 (GTHGKTT).

This sequence belongs to the MurCDEF family.

It is found in the cytoplasm. The enzyme catalyses UDP-N-acetyl-alpha-D-muramate + L-alanine + ATP = UDP-N-acetyl-alpha-D-muramoyl-L-alanine + ADP + phosphate + H(+). It participates in cell wall biogenesis; peptidoglycan biosynthesis. Its function is as follows. Cell wall formation. The polypeptide is UDP-N-acetylmuramate--L-alanine ligase (Aliivibrio salmonicida (strain LFI1238) (Vibrio salmonicida (strain LFI1238))).